A 1821-amino-acid polypeptide reads, in one-letter code: PH-interacting protein (1821 aa).

Ser136 bears the Phosphoserine mark. WD repeat units lie at residues 181-222, 224-262, 265-310, 319-360, and 363-402; these read GHLS…ATLR, HAAE…PLAV, GHSA…INPR, RPGV…KISE, and FHTD…WKSI. Residue Lys421 forms a Glycyl lysine isopeptide (Lys-Gly) (interchain with G-Cter in SUMO2) linkage. WD repeat units follow at residues 422 to 461, 464 to 504, and 512 to 551; these read ITKM…LIHV, GHED…KVRS, and QGHG…KYDK. Ser641, Ser659, Ser674, Ser677, Ser683, and Ser692 each carry phosphoserine. Disordered regions lie at residues 653-695 and 782-927; these read EQDL…SGQI and DLGD…RLAV. The segment covering 665-681 has biased composition (polar residues); sequence SNASRVNRGSVSSTSEV. The segment covering 800–810 has biased composition (basic and acidic residues); it reads SALEETPRPLE. Residues 841 to 854 are compositionally biased toward low complexity; sequence SDGSSSDYSSDYSD. Phosphoserine is present on residues Ser879, Ser880, Ser881, and Ser911. Over residues 912 to 924 the composition is skewed to basic residues; the sequence is PKKKKPKERKQKR. Positions 924 to 1129 are mediates interaction with IRS1; it reads RLAVGELTEN…MELIPNNAVF (206 aa). One can recognise a Bromo 1 domain in the interval 1156–1263; that stretch reads WGANPRDEEC…DLLLHFIKDQ (108 aa). Ser1281, Ser1283, and Ser1296 each carry phosphoserine. A disordered region spans residues 1282 to 1310; that stretch reads DSEEEEKDADVPGTSTRKRKDHQPRRRLR. The span at 1297–1310 shows a compositional bias: basic residues; that stretch reads TRKRKDHQPRRRLR. Residue Ser1315 is modified to Phosphoserine. Residues 1316 to 1421 form the Bromo 2 domain; that stretch reads YDIQAWKKQC…AFFEEHISSV (106 aa). Thr1359 carries the phosphothreonine modification. Ser1405 is modified (phosphoserine). A compositionally biased stretch (basic residues) spans 1435-1446; sequence NTISKKRKKRNR. The tract at residues 1435 to 1507 is disordered; it reads NTISKKRKKR…PESSSVVRTR (73 aa). The span at 1447 to 1457 shows a compositional bias: low complexity; sequence SSSLSSSAASS. Lys1470 is covalently cross-linked (Glycyl lysine isopeptide (Lys-Gly) (interchain with G-Cter in SUMO1); alternate). Lys1470 participates in a covalent cross-link: Glycyl lysine isopeptide (Lys-Gly) (interchain with G-Cter in SUMO2); alternate. Residues 1471-1482 are compositionally biased toward polar residues; the sequence is SEVSTSPFSIPT. Ser1479 carries the post-translational modification Phosphoserine. Lys1497 is subject to N6-acetyllysine. Residue Ser1525 is modified to Phosphoserine. N6-acetyllysine is present on Lys1533. The span at 1556 to 1576 shows a compositional bias: polar residues; sequence STLSSPDPLTFSHATKNNSAK. 3 disordered regions span residues 1556-1596, 1623-1676, and 1740-1785; these read STLS…VFSK, QVNG…NSEQ, and RSNR…DSEE. Ser1560 is subject to Phosphoserine. Residue Lys1644 forms a Glycyl lysine isopeptide (Lys-Gly) (interchain with G-Cter in SUMO2) linkage. Phosphoserine is present on Ser1651. Lys1670 participates in a covalent cross-link: Glycyl lysine isopeptide (Lys-Gly) (interchain with G-Cter in SUMO2). 2 positions are modified to phosphoserine: Ser1762 and Ser1783.

In terms of assembly, interacts (via bromo domain) with acetylated lysine residues on histone H1.4, histone H3 and H4 (in vitro). Interacts with IRS1 and IRS2. As to expression, widely expressed with most abundant expression detected in pancreatic islets, brain and skeletal muscle. Predominantly expressed in developing and regenerating neurons. Expressed in adult brain (granular layer of the olfactorium bulb, hippocampus, dentate gyrus and cerebellum internal granular layer). Expressed in the CA3 region of adult hippocampus, adult and fetal retina, perinatal dorsal root ganglion and embryonal olfactory epithelia (at protein level).

It localises to the nucleus. Functionally, probable regulator of the insulin and insulin-like growth factor signaling pathways. Stimulates cell proliferation through regulation of cyclin transcription and has an anti-apoptotic activity through AKT1 phosphorylation and activation. Plays a role in the regulation of cell morphology and cytoskeletal organization. The chain is PH-interacting protein (Phip) from Mus musculus (Mouse).